Reading from the N-terminus, the 353-residue chain is GDSL esterase/lipase At5g03810 (353 aa).

An N-terminal signal peptide occupies residues 1-24 (MKMFITMSMCLSVIACFYAGVGTG). Residue serine 37 is the Nucleophile of the active site. N-linked (GlcNAc...) asparagine glycosylation is found at asparagine 100, asparagine 255, asparagine 256, asparagine 260, and asparagine 320. Residues aspartate 328 and histidine 331 contribute to the active site.

This sequence belongs to the 'GDSL' lipolytic enzyme family.

It localises to the secreted. The protein is GDSL esterase/lipase At5g03810 of Arabidopsis thaliana (Mouse-ear cress).